The sequence spans 1370 residues: DNA-directed RNA polymerase subunit beta (1370 aa).

It belongs to the RNA polymerase beta chain family. The RNAP catalytic core consists of 2 alpha, 1 beta, 1 beta' and 1 omega subunit. When a sigma factor is associated with the core the holoenzyme is formed, which can initiate transcription.

It catalyses the reaction RNA(n) + a ribonucleoside 5'-triphosphate = RNA(n+1) + diphosphate. Its function is as follows. DNA-dependent RNA polymerase catalyzes the transcription of DNA into RNA using the four ribonucleoside triphosphates as substrates. This Syntrophobacter fumaroxidans (strain DSM 10017 / MPOB) protein is DNA-directed RNA polymerase subunit beta.